A 259-amino-acid chain; its full sequence is MSIKMKYNLGYLFDLLVVITNKDLKVRYKSSMLGYLWSVANPLLFAMIYYFIFKLVMRVQIPNYTVFLITGLFPWQWFASSATNSLFSFIANAQIIKKTVFPRSVIPLSNVMMEGLHFLCTIPVIVVFLFVYGMTPSLSWVWGIPLIAIGQVIFTFGVSIIFSTLNLFFRDLERFVSLGIMLMFYCTPILYASDMIPEKFSWIITYNPLASMILSWRDLFMNGTLNYEYISILYFTGIILTVVGLSIFNKLKYRFAEIL.

The next 6 membrane-spanning stretches (helical) occupy residues 33-53 (LGYLWSVANPLLFAMIYYFIF), 73-95 (FPWQWFASSATNSLFSFIANAQI), 111-131 (VMMEGLHFLCTIPVIVVFLFV), 142-162 (WGIPLIAIGQVIFTFGVSIIF), 176-196 (VSLGIMLMFYCTPILYASDMI), and 228-248 (EYISILYFTGIILTVVGLSIF). Residues 33 to 251 (LGYLWSVANP…VVGLSIFNKL (219 aa)) form the ABC transmembrane type-2 domain.

The protein belongs to the ABC-2 integral membrane protein family.

It localises to the cell inner membrane. Its function is as follows. May form an ATP-driven O-antigen export apparatus, in association with RfbB. The polypeptide is O-antigen export system permease protein RfbA (rfbA) (Klebsiella pneumoniae).